Consider the following 249-residue polypeptide: ATP synthase subunit a (249 aa).

Helical transmembrane passes span 33-53 (YMLI…AQLV), 83-103 (FFPL…IGII), 113-133 (LIVT…YGVA), 139-159 (FFSI…VMFI), 188-208 (VFAG…WVGG), and 216-236 (VALY…FAIL).

It belongs to the ATPase A chain family. In terms of assembly, F-type ATPases have 2 components, CF(1) - the catalytic core - and CF(0) - the membrane proton channel. CF(1) has five subunits: alpha(3), beta(3), gamma(1), delta(1), epsilon(1). CF(0) has three main subunits: a(1), b(2) and c(9-12). The alpha and beta chains form an alternating ring which encloses part of the gamma chain. CF(1) is attached to CF(0) by a central stalk formed by the gamma and epsilon chains, while a peripheral stalk is formed by the delta and b chains.

The protein resides in the cell inner membrane. Its function is as follows. Key component of the proton channel; it plays a direct role in the translocation of protons across the membrane. This is ATP synthase subunit a from Bradyrhizobium diazoefficiens (strain JCM 10833 / BCRC 13528 / IAM 13628 / NBRC 14792 / USDA 110).